The sequence spans 739 residues: Phosphoribosylformylglycinamidine synthase subunit PurL (739 aa).

Residue histidine 53 is part of the active site. ATP is bound by residues tyrosine 56 and lysine 95. Residue glutamate 97 participates in Mg(2+) binding. Residues 98–101 (SHNH) and arginine 120 contribute to the substrate site. Histidine 99 functions as the Proton acceptor in the catalytic mechanism. Aspartate 121 lines the Mg(2+) pocket. Glutamine 244 provides a ligand contact to substrate. Residue aspartate 274 participates in Mg(2+) binding. A substrate-binding site is contributed by 318–320 (ESQ). The ATP site is built by aspartate 501 and glycine 538. Residue asparagine 539 participates in Mg(2+) binding. Serine 541 lines the substrate pocket.

This sequence belongs to the FGAMS family. In terms of assembly, monomer. Part of the FGAM synthase complex composed of 1 PurL, 1 PurQ and 2 PurS subunits.

Its subcellular location is the cytoplasm. It carries out the reaction N(2)-formyl-N(1)-(5-phospho-beta-D-ribosyl)glycinamide + L-glutamine + ATP + H2O = 2-formamido-N(1)-(5-O-phospho-beta-D-ribosyl)acetamidine + L-glutamate + ADP + phosphate + H(+). It functions in the pathway purine metabolism; IMP biosynthesis via de novo pathway; 5-amino-1-(5-phospho-D-ribosyl)imidazole from N(2)-formyl-N(1)-(5-phospho-D-ribosyl)glycinamide: step 1/2. Part of the phosphoribosylformylglycinamidine synthase complex involved in the purines biosynthetic pathway. Catalyzes the ATP-dependent conversion of formylglycinamide ribonucleotide (FGAR) and glutamine to yield formylglycinamidine ribonucleotide (FGAM) and glutamate. The FGAM synthase complex is composed of three subunits. PurQ produces an ammonia molecule by converting glutamine to glutamate. PurL transfers the ammonia molecule to FGAR to form FGAM in an ATP-dependent manner. PurS interacts with PurQ and PurL and is thought to assist in the transfer of the ammonia molecule from PurQ to PurL. This chain is Phosphoribosylformylglycinamidine synthase subunit PurL, found in Listeria monocytogenes serotype 4b (strain CLIP80459).